A 127-amino-acid chain; its full sequence is Evasin P467 (127 aa).

A signal peptide spans 1–21; it reads MALKACITVIAVVYVVQVVRG. 4 disulfide bridges follow: Cys-42/Cys-63, Cys-59/Cys-100, Cys-76/Cys-105, and Cys-95/Cys-114. N-linked (GlcNAc...) asparagine glycans are attached at residues Asn-49 and Asn-94.

The protein resides in the secreted. In terms of biological role, salivary chemokine-binding protein which binds to host chemokines CCL1, CCL2, CCL3 and CCL5. This Rhipicephalus pulchellus (Yellow backed tick) protein is Evasin P467.